The following is a 621-amino-acid chain: Very-long-chain aldehyde decarbonylase GL1-5 (621 aa).

5 helical membrane-spanning segments follow: residues 99–119 (IILS…GQHL), 126–146 (GAGL…YWFH), 186–206 (LLFS…IIAF), 224–244 (FELV…LMYT), and 332–352 (MWPL…SFTV). The region spanning 138-272 (VEFLYYWFHR…MPFYDYIYNT (135 aa)) is the Fatty acid hydroxylase domain.

It belongs to the sterol desaturase family. As to quaternary structure, homodimer.

The protein resides in the endoplasmic reticulum membrane. The catalysed reaction is a long-chain fatty aldehyde + 2 NADPH + O2 + H(+) = a long-chain alkane + formate + 2 NADP(+) + H2O. Functionally, aldehyde decarbonylase involved in the conversion of aldehydes to alkanes. Core component of a very-long-chain alkane synthesis complex. The chain is Very-long-chain aldehyde decarbonylase GL1-5 from Oryza sativa subsp. indica (Rice).